Consider the following 405-residue polypeptide: Argininosuccinate synthase (405 aa).

ATP is bound by residues 10–18 (AYSGGLDTS) and Ala37. L-citrulline-binding residues include Tyr88 and Ser93. An ATP-binding site is contributed by Gly118. Thr120, Asn124, and Asp125 together coordinate L-aspartate. Asn124 contributes to the L-citrulline binding site. L-citrulline-binding residues include Arg128, Ser179, Ser188, Glu264, and Tyr276.

This sequence belongs to the argininosuccinate synthase family. Type 1 subfamily. Homotetramer.

The protein resides in the cytoplasm. The enzyme catalyses L-citrulline + L-aspartate + ATP = 2-(N(omega)-L-arginino)succinate + AMP + diphosphate + H(+). The protein operates within amino-acid biosynthesis; L-arginine biosynthesis; L-arginine from L-ornithine and carbamoyl phosphate: step 2/3. The protein is Argininosuccinate synthase of Ectopseudomonas mendocina (strain ymp) (Pseudomonas mendocina).